A 59-amino-acid polypeptide reads, in one-letter code: Probable stress-associated endoplasmic reticulum protein (59 aa).

The segment at 1–30 (MSQSRTLRQKSQKYQENIEKRGVASPKKKE) is disordered. Residues 1-34 (MSQSRTLRQKSQKYQENIEKRGVASPKKKEDGLN) lie on the Cytoplasmic side of the membrane. The span at 16–30 (ENIEKRGVASPKKKE) shows a compositional bias: basic and acidic residues. Residues 35–55 (INPYVLGFIIFVVVGSTLLQI) traverse the membrane as a helical; Anchor for type IV membrane protein segment. The Extracellular segment spans residues 56-59 (LKGQ).

This sequence belongs to the RAMP4 family.

The protein localises to the membrane. It localises to the endoplasmic reticulum membrane. Its function is as follows. May interact with target proteins during translocation into the lumen of the endoplasmic reticulum. May protect unfolded target proteins against degradation and facilitate correct glycosylation. The polypeptide is Probable stress-associated endoplasmic reticulum protein (serp) (Dictyostelium discoideum (Social amoeba)).